Here is a 382-residue protein sequence, read N- to C-terminus: Pregnancy-associated glycoprotein 1 (382 aa).

The signal sequence occupies residues 1 to 15 (MKWLVLLGLVAFSEC). Residues 16-53 (IVKIPLRRVKTMRNTLSGKKMLNSFLKEHAYRLSQISF) constitute a propeptide, activation peptide. N-linked (GlcNAc...) asparagine glycans are attached at residues Asn57 and Asn74. One can recognise a Peptidase A1 domain in the interval 71–379 (YVGNITIGTP…DRGNDRIGLA (309 aa)). A disulfide bridge connects residues Cys102 and Cys110. Residue Asn128 is glycosylated (N-linked (GlcNAc...) asparagine). 2 disulfide bridges follow: Cys263/Cys267 and Cys305/Cys339.

It belongs to the peptidase A1 family. In terms of tissue distribution, trophoblast and placental tissue. Produced specifically in the invasive binucleate cells of the placenta.

It localises to the secreted. Its subcellular location is the extracellular space. In terms of biological role, has no proteolytic activity. This Ovis aries (Sheep) protein is Pregnancy-associated glycoprotein 1.